We begin with the raw amino-acid sequence, 518 residues long: Dihydropyrimidinase 2 (518 aa).

Residues histidine 59, histidine 61, and lysine 152 each coordinate Zn(2+). The residue at position 152 (lysine 152) is an N6-carboxylysine. Residue tyrosine 157 participates in substrate binding. Zn(2+)-binding residues include histidine 185 and histidine 241. Serine 291 is a binding site for substrate. A Zn(2+)-binding site is contributed by aspartate 319. Asparagine 340 contributes to the substrate binding site.

Belongs to the metallo-dependent hydrolases superfamily. Hydantoinase/dihydropyrimidinase family. Homotetramer. Requires Zn(2+) as cofactor. Carboxylation allows a single lysine to coordinate two zinc ions.

The enzyme catalyses 5,6-dihydrouracil + H2O = 3-(carbamoylamino)propanoate + H(+). The chain is Dihydropyrimidinase 2 (dhp-2) from Caenorhabditis briggsae.